Reading from the N-terminus, the 331-residue chain is Putative peptidyl-prolyl cis-trans isomerase RF_0616 (331 aa).

The segment at 28-50 (NPTTIEQTASNNSSTDENQTSIN) is disordered. Residues 128–226 (GHVVTVFYQI…NNEVKIYDDE (99 aa)) form the PPIase FKBP-type domain.

It catalyses the reaction [protein]-peptidylproline (omega=180) = [protein]-peptidylproline (omega=0). This chain is Putative peptidyl-prolyl cis-trans isomerase RF_0616, found in Rickettsia felis (strain ATCC VR-1525 / URRWXCal2) (Rickettsia azadi).